A 303-amino-acid chain; its full sequence is Diaminopimelate epimerase (303 aa).

Substrate-binding residues include Asn-15, Gln-47, and Asn-67. Cys-76 acts as the Proton donor in catalysis. Residues Gly-77–Asn-78, Asn-163, Asn-197, and Glu-215–Arg-216 contribute to the substrate site. Cys-224 acts as the Proton acceptor in catalysis. Residue Gly-225–Ser-226 coordinates substrate. The tract at residues Asp-279–Ala-303 is disordered.

It belongs to the diaminopimelate epimerase family. As to quaternary structure, homodimer.

It is found in the cytoplasm. The enzyme catalyses (2S,6S)-2,6-diaminopimelate = meso-2,6-diaminopimelate. It participates in amino-acid biosynthesis; L-lysine biosynthesis via DAP pathway; DL-2,6-diaminopimelate from LL-2,6-diaminopimelate: step 1/1. Catalyzes the stereoinversion of LL-2,6-diaminopimelate (L,L-DAP) to meso-diaminopimelate (meso-DAP), a precursor of L-lysine and an essential component of the bacterial peptidoglycan. This is Diaminopimelate epimerase from Brucella canis (strain ATCC 23365 / NCTC 10854 / RM-666).